Consider the following 496-residue polypeptide: Alpha-amylase (496 aa).

Residues Cys29 and Cys85 are joined by a disulfide bond. 3 residues coordinate Ca(2+): Asn99, Arg155, and Asp164. Arg192 provides a ligand contact to chloride. Asp194 (nucleophile) is an active-site residue. His198 serves as a coordination point for Ca(2+). Residue Glu230 is the Proton donor of the active site. Arg332 provides a ligand contact to chloride. Intrachain disulfides connect Cys374-Cys380 and Cys448-Cys460.

It belongs to the glycosyl hydrolase 13 family. In terms of assembly, monomer. Requires Ca(2+) as cofactor. The cofactor is chloride. Disulfide bonds are present.

The protein localises to the secreted. The enzyme catalyses Endohydrolysis of (1-&gt;4)-alpha-D-glucosidic linkages in polysaccharides containing three or more (1-&gt;4)-alpha-linked D-glucose units.. Its activity is regulated as follows. Inhibited by alpha-amylase inhibitors from wheat and rye. The most effective inhibitors are the wheat tetrameric alpha-amylase inhibitor (WTAI) and the rye dimeric alpha-amylase inhibitor (RDAI-1). Not inhibited by alpha-amylase inhibitor from barley. Functionally, aids in the digestion of starch and glycogen derived from food, such as skin scales, fungi and bacteria. This Dermatophagoides pteronyssinus (European house dust mite) protein is Alpha-amylase.